Reading from the N-terminus, the 410-residue chain is F-box/WD repeat-containing protein 4 (410 aa).

The region spanning 23 to 69 is the F-box domain; that stretch reads GPALWRLPEELLLLICSYLDTRALGRLAQVCRWLRRFTSCDLLWRPI. WD repeat units lie at residues 159–196, 198–235, 289–327, and 333–372; these read GHDE…TVKY, AHEQ…LGQC, PPGA…RKCV, and PHDS…CLHA.

In terms of assembly, part of a SCF (SKP1-cullin-F-box) protein ligase complex. Interacts with POUF51.

Probably recognizes and binds to some phosphorylated proteins and promotes their ubiquitination and degradation. Likely to be involved in key signaling pathways crucial for normal limb development. May participate in Wnt signaling. In Mus musculus (Mouse), this protein is F-box/WD repeat-containing protein 4 (Fbxw4).